A 138-amino-acid polypeptide reads, in one-letter code: High mobility group B protein 4 (138 aa).

Disordered stretches follow at residues 1–41 (MKGG…PPSA) and 105–138 (LKLA…EDDD). Over residues 18 to 29 (KTRGRKAGKKTK) the composition is skewed to basic residues. Residues 35–104 (PKRPPSAFFV…EYIKNVQQYN (70 aa)) constitute a DNA-binding region (HMG box). A phosphoserine mark is found at Ser123 and Ser130. Positions 126–138 (DEAVSEEEAEDDD) are enriched in acidic residues.

It belongs to the HMGB family. Mostly expressed roots and flowers, and, to a lower extent, in stems and leaves.

Its subcellular location is the nucleus. It localises to the cytoplasm. The protein resides in the cytosol. Functionally, binds preferentially double-stranded DNA. The polypeptide is High mobility group B protein 4 (HMGB4) (Arabidopsis thaliana (Mouse-ear cress)).